A 426-amino-acid polypeptide reads, in one-letter code: Serine--tRNA ligase (426 aa).

An L-serine-binding site is contributed by 231–233 (TAE). 262–264 (RAE) is a binding site for ATP. Glutamate 285 provides a ligand contact to L-serine. Residue 349 to 352 (EISS) coordinates ATP. Position 385 (serine 385) interacts with L-serine.

Belongs to the class-II aminoacyl-tRNA synthetase family. Type-1 seryl-tRNA synthetase subfamily. Homodimer. The tRNA molecule binds across the dimer.

The protein localises to the cytoplasm. It carries out the reaction tRNA(Ser) + L-serine + ATP = L-seryl-tRNA(Ser) + AMP + diphosphate + H(+). The catalysed reaction is tRNA(Sec) + L-serine + ATP = L-seryl-tRNA(Sec) + AMP + diphosphate + H(+). The protein operates within aminoacyl-tRNA biosynthesis; selenocysteinyl-tRNA(Sec) biosynthesis; L-seryl-tRNA(Sec) from L-serine and tRNA(Sec): step 1/1. In terms of biological role, catalyzes the attachment of serine to tRNA(Ser). Is also able to aminoacylate tRNA(Sec) with serine, to form the misacylated tRNA L-seryl-tRNA(Sec), which will be further converted into selenocysteinyl-tRNA(Sec). The sequence is that of Serine--tRNA ligase from Myxococcus xanthus (strain DK1622).